We begin with the raw amino-acid sequence, 377 residues long: Succinyl-diaminopimelate desuccinylase (377 aa).

H68 lines the Zn(2+) pocket. D70 is a catalytic residue. A Zn(2+)-binding site is contributed by D101. The Proton acceptor role is filled by E135. Residues E136, E164, and H350 each contribute to the Zn(2+) site.

The protein belongs to the peptidase M20A family. DapE subfamily. As to quaternary structure, homodimer. It depends on Zn(2+) as a cofactor. Co(2+) is required as a cofactor.

The enzyme catalyses N-succinyl-(2S,6S)-2,6-diaminopimelate + H2O = (2S,6S)-2,6-diaminopimelate + succinate. The protein operates within amino-acid biosynthesis; L-lysine biosynthesis via DAP pathway; LL-2,6-diaminopimelate from (S)-tetrahydrodipicolinate (succinylase route): step 3/3. In terms of biological role, catalyzes the hydrolysis of N-succinyl-L,L-diaminopimelic acid (SDAP), forming succinate and LL-2,6-diaminopimelate (DAP), an intermediate involved in the bacterial biosynthesis of lysine and meso-diaminopimelic acid, an essential component of bacterial cell walls. The polypeptide is Succinyl-diaminopimelate desuccinylase (Aliivibrio fischeri (strain MJ11) (Vibrio fischeri)).